We begin with the raw amino-acid sequence, 309 residues long: 2-dehydro-3-deoxygluconokinase (309 aa).

Residues 28–32 (GDTLN), Y88, 102–104 (YWR), and R170 contribute to the substrate site. ATP-binding positions include 168–170 (NYR), 228–233 (KRGADS), and 261–264 (AAGD). D264 is a binding site for substrate. D264 serves as the catalytic Proton acceptor.

This sequence belongs to the carbohydrate kinase PfkB family.

The catalysed reaction is 2-dehydro-3-deoxy-D-gluconate + ATP = 2-dehydro-3-deoxy-6-phospho-D-gluconate + ADP + H(+). It functions in the pathway carbohydrate acid metabolism; 2-dehydro-3-deoxy-D-gluconate degradation; D-glyceraldehyde 3-phosphate and pyruvate from 2-dehydro-3-deoxy-D-gluconate: step 1/2. Catalyzes the phosphorylation of 2-keto-3-deoxygluconate (KDG) to produce 2-keto-3-deoxy-6-phosphogluconate (KDPG). This chain is 2-dehydro-3-deoxygluconokinase (kdgK), found in Escherichia coli (strain K12).